Consider the following 118-residue polypeptide: Large ribosomal subunit protein bL20 (118 aa).

This sequence belongs to the bacterial ribosomal protein bL20 family.

Functionally, binds directly to 23S ribosomal RNA and is necessary for the in vitro assembly process of the 50S ribosomal subunit. It is not involved in the protein synthesizing functions of that subunit. This chain is Large ribosomal subunit protein bL20, found in Staphylococcus carnosus (strain TM300).